Consider the following 405-residue polypeptide: Na(+)/H(+) antiporter NhaA 1 (405 aa).

11 consecutive transmembrane segments (helical) span residues 20 to 40 (FVSD…AMIV), 68 to 88 (LHLW…GLEV), 105 to 125 (LPVL…VGVV), 134 to 154 (GWAI…GLLG), 163 to 183 (LFLL…IAAF), 186 to 206 (ANLK…MVGM), 214 to 234 (IWPY…SGVH), 263 to 283 (GLAP…NAGV), 301 to 321 (IAAG…VAAV), 334 to 354 (WIEI…SLFI), and 371 to 391 (IGIL…LRLT).

Belongs to the NhaA Na(+)/H(+) (TC 2.A.33) antiporter family.

The protein resides in the cell inner membrane. The enzyme catalyses Na(+)(in) + 2 H(+)(out) = Na(+)(out) + 2 H(+)(in). In terms of biological role, na(+)/H(+) antiporter that extrudes sodium in exchange for external protons. The protein is Na(+)/H(+) antiporter NhaA 1 of Erythrobacter litoralis (strain HTCC2594).